Consider the following 105-residue polypeptide: Small ribosomal subunit protein uS10 (105 aa).

This sequence belongs to the universal ribosomal protein uS10 family. As to quaternary structure, part of the 30S ribosomal subunit.

Functionally, involved in the binding of tRNA to the ribosomes. This Desulfovibrio desulfuricans (strain ATCC 27774 / DSM 6949 / MB) protein is Small ribosomal subunit protein uS10.